Reading from the N-terminus, the 349-residue chain is tRNA (guanine(26)-N(2))-dimethyltransferase (349 aa).

A Trm1 methyltransferase domain is found at 1–343 (MEVEEGRARV…ADRDVVVKIL (343 aa)). 5 residues coordinate S-adenosyl-L-methionine: R25, R50, D66, D92, and A93.

It belongs to the class I-like SAM-binding methyltransferase superfamily. Trm1 family.

It catalyses the reaction guanosine(26) in tRNA + 2 S-adenosyl-L-methionine = N(2)-dimethylguanosine(26) in tRNA + 2 S-adenosyl-L-homocysteine + 2 H(+). Dimethylates a single guanine residue at position 26 of a number of tRNAs using S-adenosyl-L-methionine as donor of the methyl groups. The sequence is that of tRNA (guanine(26)-N(2))-dimethyltransferase from Archaeoglobus fulgidus (strain ATCC 49558 / DSM 4304 / JCM 9628 / NBRC 100126 / VC-16).